We begin with the raw amino-acid sequence, 288 residues long: UDP-3-O-acyl-N-acetylglucosamine deacetylase (288 aa).

Zn(2+) contacts are provided by His79, His236, and Asp240. His263 acts as the Proton donor in catalysis.

Belongs to the LpxC family. Zn(2+) is required as a cofactor.

The enzyme catalyses a UDP-3-O-[(3R)-3-hydroxyacyl]-N-acetyl-alpha-D-glucosamine + H2O = a UDP-3-O-[(3R)-3-hydroxyacyl]-alpha-D-glucosamine + acetate. Its pathway is glycolipid biosynthesis; lipid IV(A) biosynthesis; lipid IV(A) from (3R)-3-hydroxytetradecanoyl-[acyl-carrier-protein] and UDP-N-acetyl-alpha-D-glucosamine: step 2/6. Functionally, catalyzes the hydrolysis of UDP-3-O-myristoyl-N-acetylglucosamine to form UDP-3-O-myristoylglucosamine and acetate, the committed step in lipid A biosynthesis. This Rickettsia africae (strain ESF-5) protein is UDP-3-O-acyl-N-acetylglucosamine deacetylase.